Here is a 288-residue protein sequence, read N- to C-terminus: Phenazine biosynthesis-like domain-containing protein (288 aa).

Glu-46 is a catalytic residue.

This sequence belongs to the PhzF family. In terms of assembly, interacts with UNRIP/MAWD.

This chain is Phenazine biosynthesis-like domain-containing protein (PBLD), found in Bos taurus (Bovine).